A 393-amino-acid chain; its full sequence is Cytochrome b (393 aa).

The next 4 helical transmembrane spans lie at phenylalanine 32–methionine 52, tryptophan 76–glycine 98, leucine 113–valine 133, and phenylalanine 179–leucine 199. Histidine 82 and histidine 96 together coordinate heme b. Positions 183 and 197 each coordinate heme b. Histidine 202 serves as a coordination point for a ubiquinone. Helical transmembrane passes span phenylalanine 225–phenylalanine 245, leucine 289–aspartate 309, leucine 321–serine 341, and tyrosine 348–proline 368.

The protein belongs to the cytochrome b family. In terms of assembly, fungal cytochrome b-c1 complex contains 10 subunits; 3 respiratory subunits, 2 core proteins and 5 low-molecular weight proteins. Cytochrome b-c1 complex is a homodimer. It depends on heme b as a cofactor.

Its subcellular location is the mitochondrion inner membrane. Component of the ubiquinol-cytochrome c reductase complex (complex III or cytochrome b-c1 complex) that is part of the mitochondrial respiratory chain. The b-c1 complex mediates electron transfer from ubiquinol to cytochrome c. Contributes to the generation of a proton gradient across the mitochondrial membrane that is then used for ATP synthesis. This Mycosarcoma maydis (Corn smut fungus) protein is Cytochrome b (COB).